We begin with the raw amino-acid sequence, 548 residues long: Chaperonin GroEL (548 aa).

ATP contacts are provided by residues 30-33 (TLGP), K51, 87-91 (DGTTT), G415, 479-481 (NAA), and D495.

The protein belongs to the chaperonin (HSP60) family. In terms of assembly, forms a cylinder of 14 subunits composed of two heptameric rings stacked back-to-back. Interacts with the co-chaperonin GroES.

It localises to the cytoplasm. The catalysed reaction is ATP + H2O + a folded polypeptide = ADP + phosphate + an unfolded polypeptide.. Its function is as follows. Together with its co-chaperonin GroES, plays an essential role in assisting protein folding. The GroEL-GroES system forms a nano-cage that allows encapsulation of the non-native substrate proteins and provides a physical environment optimized to promote and accelerate protein folding. The polypeptide is Chaperonin GroEL (Aliivibrio fischeri (strain MJ11) (Vibrio fischeri)).